The primary structure comprises 571 residues: MGNWITSTFLRFDLFQRHQPNRFLEYTRVQHSNQSPAYSVRTAAEIVAHQRMKPNHSNDSDTDFSSDDEGCPKMTPHEEQQMFEREQHIAFSGRCHIGDPESCTQLRNEINSRCGPRPSTSNNMEFILNRDLQKRGTSISNPRTVARVLNSHLPNQKRRVDRVATKSFCTQYIQNGTKIVVASQDEKIRFYQRNPDKSKYRSKYMKSDELRVDQCGWSILDTAISLNGDLIAYGTWKDAVFVGKLDFTERQNITWFPIDLNGEPGRDHCAVFCVKFSDSSEQIVCGTSQYSIHVFDVEQRRRIRTIVNAHEDDVNSVCFADLGSNLIYSAGDDGLVKVWDKRAWSDGDVEPVGVFAGHRDGVTHVDSRQDERYLLSNSKDQTIKVWDLRKFSNMSGVEATRACVQSQHWDYRWQPAPPGLCQPVAGDTSVMTLRGHSVLHTLVRANFSPESTGRRYIYTGCARGEVVVYDIMSGTVSRRLKGHTAVVRECDWHPTENEIVSSAWDGVTTVWTWDERQEGVIAPYDHPNISQFGDEDSCDELFQPVKKQCRRQRKTMSSRGHPCSSSSISQN.

The tract at residues 51–75 (RMKPNHSNDSDTDFSSDDEGCPKMT) is disordered. Positions 60–69 (SDTDFSSDDE) are enriched in acidic residues. WD repeat units lie at residues 162–201 (RVAT…SKYR), 266–305 (RDHC…RIRT), 309–349 (AHED…DGDV), 357–396 (GHRD…NMSG), 435–479 (GHSV…VSRR), and 482–521 (GHTA…EGVI).

It belongs to the WD repeat LEC14B family.

Its function is as follows. Involved in regulation of lifespan. Required for dopaminergic CEP neuron degeneration in response to Mn(2+). Inhibits the skn-1-mediated up-regulation of tatn-1. The protein is DDB1- and CUL4-associated factor 11 homolog of Caenorhabditis elegans.